Here is a 324-residue protein sequence, read N- to C-terminus: PDZ domain-containing protein MAGIX (324 aa).

The segment at Met1–Pro26 is disordered. The region spanning Ser128–Gln212 is the PDZ domain. Residues Gly216–Ser241 show a composition bias toward basic and acidic residues. A disordered region spans residues Gly216–Glu263. Ser261 carries the post-translational modification Phosphoserine.

The protein is PDZ domain-containing protein MAGIX (Magix) of Mus musculus (Mouse).